The following is a 307-amino-acid chain: Small ribosomal subunit biogenesis GTPase RsgA (307 aa).

The interval 1 to 21 (MPSEHPFSDGISTPNPKETMN) is disordered. Residues 10-21 (GISTPNPKETMN) are compositionally biased toward polar residues. One can recognise a CP-type G domain in the interval 85-242 (RQDAWKTKLI…LIDSPGLQEF (158 aa)). Residues 135-138 (NKAD) and 184-192 (GQSGMGKST) contribute to the GTP site. Residues cysteine 266, cysteine 271, histidine 273, and cysteine 279 each coordinate Zn(2+).

It belongs to the TRAFAC class YlqF/YawG GTPase family. RsgA subfamily. As to quaternary structure, monomer. Associates with 30S ribosomal subunit, binds 16S rRNA. The cofactor is Zn(2+).

Its subcellular location is the cytoplasm. Functionally, one of several proteins that assist in the late maturation steps of the functional core of the 30S ribosomal subunit. Helps release RbfA from mature subunits. May play a role in the assembly of ribosomal proteins into the subunit. Circularly permuted GTPase that catalyzes slow GTP hydrolysis, GTPase activity is stimulated by the 30S ribosomal subunit. The protein is Small ribosomal subunit biogenesis GTPase RsgA of Neisseria gonorrhoeae (strain ATCC 700825 / FA 1090).